Here is a 129-residue protein sequence, read N- to C-terminus: Lysozyme C (129 aa).

Residues 1–129 enclose the C-type lysozyme domain; the sequence is KVYGRCELAA…VHAWIRGCRL (129 aa). 4 cysteine pairs are disulfide-bonded: Cys-6/Cys-127, Cys-30/Cys-115, Cys-64/Cys-80, and Cys-76/Cys-94. Active-site residues include Glu-35 and Asp-52.

It belongs to the glycosyl hydrolase 22 family. As to quaternary structure, monomer.

It localises to the secreted. It catalyses the reaction Hydrolysis of (1-&gt;4)-beta-linkages between N-acetylmuramic acid and N-acetyl-D-glucosamine residues in a peptidoglycan and between N-acetyl-D-glucosamine residues in chitodextrins.. Lysozymes have primarily a bacteriolytic function; those in tissues and body fluids are associated with the monocyte-macrophage system and enhance the activity of immunoagents. The protein is Lysozyme C (LYZ) of Tragopan temminckii (Temminck's tragopan).